We begin with the raw amino-acid sequence, 502 residues long: Nucleoside transporter 2 (502 aa).

Over Met1 to Thr30 the chain is Cytoplasmic. A helical transmembrane segment spans residues Tyr31 to Ala51. The Extracellular portion of the chain corresponds to Pro52–Thr81. A helical membrane pass occupies residues Phe82 to Phe102. Residues Met103–Arg111 are Cytoplasmic-facing. A helical membrane pass occupies residues Leu112 to Ala132. Residues Thr133–Gln137 lie on the Extracellular side of the membrane. Residues His138 to Cys158 form a helical membrane-spanning segment. Over Asp159–Gln178 the chain is Cytoplasmic. A helical membrane pass occupies residues Trp179–Met199. Over Gly200–Ser210 the chain is Extracellular. The chain crosses the membrane as a helical span at residues Arg211–Leu231. At Arg232–Leu352 the chain is on the cytoplasmic side. The interval Ala252–Asp273 is disordered. The chain crosses the membrane as a helical span at residues Val353–Val373. The Extracellular segment spans residues Ser374–Tyr380. A helical membrane pass occupies residues Met381–Phe401. Residues Arg402 to Pro408 lie on the Cytoplasmic side of the membrane. Residues Lys409 to Val429 traverse the membrane as a helical segment. Topologically, residues Arg430–Glu436 are extracellular. The helical transmembrane segment at Ala437–Ala457 threads the bilayer. At Cys458–Ala477 the chain is on the cytoplasmic side. Residues Met478 to Ile498 form a helical membrane-spanning segment. At Thr499 to His502 the chain is on the extracellular side.

The protein belongs to the SLC29A/ENT transporter (TC 2.A.57) family.

Its subcellular location is the cell membrane. It carries out the reaction inosine(in) = inosine(out). It catalyses the reaction guanosine(in) = guanosine(out). High affinity transporter for inosine and guanosine. The chain is Nucleoside transporter 2 from Crithidia fasciculata.